A 75-amino-acid chain; its full sequence is Protein EGO2 (75 aa).

This Saccharomyces cerevisiae (strain ATCC 204508 / S288c) (Baker's yeast) protein is Protein EGO2.